The following is a 620-amino-acid chain: Glutathione-regulated potassium-efflux system protein KefC (620 aa).

12 helical membrane passes run 4-24 (HTLI…PIAV), 26-46 (LGLG…PWGL), 54-74 (SILH…GLEL), 90-110 (GALQ…LLGL), 114-134 (VAEL…MQAM), 149-169 (FAVL…IPLL), 178-198 (MGAF…VVLL), 218-238 (VFSA…EEVG), 270-290 (GLLL…GTLI), 294-314 (LRIV…LWLI), 327-347 (WFAV…GAAQ), and 359-379 (SLTL…VILN). Residues 399-518 (QPRVIIAGFG…AGVEKPERET (120 aa)) enclose the RCK N-terminal domain. The segment at 597-620 (GWQGTEEGKHTGNMADEPETKPSS) is disordered.

It belongs to the monovalent cation:proton antiporter 2 (CPA2) transporter (TC 2.A.37) family. KefC subfamily. In terms of assembly, homodimer. Interacts with the regulatory subunit KefF.

Its subcellular location is the cell inner membrane. In terms of biological role, pore-forming subunit of a potassium efflux system that confers protection against electrophiles. Catalyzes K(+)/H(+) antiport. The sequence is that of Glutathione-regulated potassium-efflux system protein KefC from Escherichia coli (strain SMS-3-5 / SECEC).